The chain runs to 253 residues: Imidazole glycerol phosphate synthase subunit HisF (253 aa).

Catalysis depends on residues Asp11 and Asp130.

This sequence belongs to the HisA/HisF family. In terms of assembly, heterodimer of HisH and HisF.

It localises to the cytoplasm. The enzyme catalyses 5-[(5-phospho-1-deoxy-D-ribulos-1-ylimino)methylamino]-1-(5-phospho-beta-D-ribosyl)imidazole-4-carboxamide + L-glutamine = D-erythro-1-(imidazol-4-yl)glycerol 3-phosphate + 5-amino-1-(5-phospho-beta-D-ribosyl)imidazole-4-carboxamide + L-glutamate + H(+). It participates in amino-acid biosynthesis; L-histidine biosynthesis; L-histidine from 5-phospho-alpha-D-ribose 1-diphosphate: step 5/9. In terms of biological role, IGPS catalyzes the conversion of PRFAR and glutamine to IGP, AICAR and glutamate. The HisF subunit catalyzes the cyclization activity that produces IGP and AICAR from PRFAR using the ammonia provided by the HisH subunit. In Geobacter metallireducens (strain ATCC 53774 / DSM 7210 / GS-15), this protein is Imidazole glycerol phosphate synthase subunit HisF.